The primary structure comprises 637 residues: MASAEMRERLEAPLPDRAVPIYVAGFLALYDSGDPGELALDPDTVRAALPPENPLPINVDHRARCEVGRVLAVVNDPRGPFFVGLIACVQLERVLETAASAAIFERRGPALSREERLLYLITNYLPSVSLSTKRRGDEVPPDRTLFAHVALCAIGRRLGTIVTYDTSLDAAIAPFRHLDPATREGVRREAAEAELALAGRTWAPGVEALTHTLLSTAVNNMMLRDRWSLVAERRRQAGIAGHTYLQASEKFKIWGAESAPAPERGYKTGAPGAMDTSPAASVPAPQVAVRARQVASSSSSSSFPAPADMNPVSASGAPAPPPPGDGSYLWIPASHYNQLVTGQSAPRHPPLTACGLPAAGTVAYGHPGAGPSPHYPPPPAHPYPGMLFAGPSPLEAQIAALVGAIAADRQAGGLPAAAGDHGIRGSAKRRRHEVEQPEYDCGRDEPDRDFPYYPGEARPEPRPVDSRRAARQASGPHETITALVGAVTSLQQELAHMRARTHAPYGPYPPVGPYHHPHADTETPAQPPRYPAKAVYLPPPHIAPPGPPLSGAVPPPSYPPVAVTPGPAPPLHQPSPAHAHPPPPPPGPTPPPAASLPQPEAPGAEAGALVNASSAAHVNVDTARAADLFVSQMMGSR.

Active-site charge relay system residues include histidine 61, serine 129, and histidine 148. Disordered stretches follow at residues 262 to 326 (PERG…PGDG), 414 to 479 (LPAA…PHET), and 502 to 608 (HAPY…EAGA). The span at 277-317 (SPAASVPAPQVAVRARQVASSSSSSSFPAPADMNPVSASGA) shows a compositional bias: low complexity. The segment at 326 to 345 (GSYLWIPASHYNQLVTGQSA) is interaction with pAP. A Nuclear localization signal motif is present at residues 428–431 (KRRR). 2 stretches are compositionally biased toward basic and acidic residues: residues 432–450 (HEVE…DRDF) and 457–468 (ARPEPRPVDSRR). 2 stretches are compositionally biased toward pro residues: residues 537 to 559 (LPPP…PSYP) and 566 to 594 (GPAP…PPAA). A compositionally biased stretch (low complexity) spans 595–608 (SLPQPEAPGAEAGA). Residues 617–637 (HVNVDTARAADLFVSQMMGSR) form an interaction with major capsid protein region.

The protein belongs to the herpesviridae capsid scaffolding protein family. As to quaternary structure, homomultimer. Interacts with major capsid protein. In terms of assembly, exists in a monomer-dimer equilibrium with the dimer being the active species. Capsid scaffolding protein is cleaved by assemblin after formation of the spherical procapsid. As a result, the capsid obtains its mature, icosahedral shape. Cleavages occur at two or more sites: release (R-site) and maturation (M-site).

The protein localises to the host cytoplasm. It localises to the host nucleus. The enzyme catalyses Cleaves -Ala-|-Ser- and -Ala-|-Ala- bonds in the scaffold protein.. In terms of biological role, acts as a scaffold protein by binding major capsid protein in the cytoplasm, inducing the nuclear localization of both proteins. Multimerizes in the nucleus such as major capsid protein forms the icosahedral T=16 capsid. Autocatalytic cleavage releases the assembly protein, and subsequently abolishes interaction with major capsid protein. Cleavages products are evicted from the capsid before or during DNA packaging. Its function is as follows. Protease that plays an essential role in virion assembly within the nucleus. Catalyzes the cleavage of the assembly protein after formation of the spherical procapsid. By that cleavage, the capsid matures and gains its icosahedral shape. The cleavage sites seem to include -Ala-Ser-, -Ala-Ala-, as well as Ala-Thr bonds. Assemblin and cleavages products are evicted from the capsid before or during DNA packaging. Functionally, plays a major role in capsid assembly. Acts as a scaffold protein by binding major capsid protein. Multimerizes in the nucleus such as major capsid protein forms the icosahedral T=16 capsid. Cleaved by assemblin after capsid completion. The cleavages products are evicted from the capsid before or during DNA packaging. The chain is Capsid scaffolding protein (UL26) from Homo sapiens (Human).